Here is a 300-residue protein sequence, read N- to C-terminus: Homoserine kinase (300 aa).

Residue 87–97 (PISRGLGSSSA) participates in ATP binding.

Belongs to the GHMP kinase family. Homoserine kinase subfamily.

The protein localises to the cytoplasm. The catalysed reaction is L-homoserine + ATP = O-phospho-L-homoserine + ADP + H(+). It functions in the pathway amino-acid biosynthesis; L-threonine biosynthesis; L-threonine from L-aspartate: step 4/5. In terms of biological role, catalyzes the ATP-dependent phosphorylation of L-homoserine to L-homoserine phosphate. The polypeptide is Homoserine kinase (Clostridium kluyveri (strain ATCC 8527 / DSM 555 / NBRC 12016 / NCIMB 10680 / K1)).